A 426-amino-acid polypeptide reads, in one-letter code: Transcription factor bHLH60 (426 aa).

Polar residues-rich tracts occupy residues 117 to 137 (QNGN…SSAN) and 148 to 172 (TDSS…QNNR). The segment at 117–201 (QNGNISGETP…SSEENEKLPY (85 aa)) is disordered. The span at 191 to 200 (KSSEENEKLP) shows a compositional bias: basic and acidic residues. In terms of domain architecture, bHLH spans 210 to 307 (QATDSHSLAE…DEIINHVQSL (98 aa)). The tract at residues 367–398 (HRQLQQPPTQQWPFDGLNQPVWGREEDQAHGN) is disordered.

Homodimer. Expressed constitutively in roots, leaves, stems, and flowers.

It is found in the nucleus. The chain is Transcription factor bHLH60 (BHLH60) from Arabidopsis thaliana (Mouse-ear cress).